A 391-amino-acid polypeptide reads, in one-letter code: S-adenosylmethionine synthase (391 aa).

Residue His14 coordinates ATP. Asp16 lines the Mg(2+) pocket. Glu42 contacts K(+). L-methionine-binding residues include Glu55 and Gln98. The interval 98–108 (QSVDIAMGVDE) is flexible loop. ATP is bound by residues 172-174 (DGK), 238-239 (RF), Asp247, 253-254 (RK), Ala270, and Lys274. Asp247 is a binding site for L-methionine. Lys278 is an L-methionine binding site.

Belongs to the AdoMet synthase family. As to quaternary structure, homotetramer; dimer of dimers. Mg(2+) is required as a cofactor. K(+) serves as cofactor.

The protein localises to the cytoplasm. It catalyses the reaction L-methionine + ATP + H2O = S-adenosyl-L-methionine + phosphate + diphosphate. It participates in amino-acid biosynthesis; S-adenosyl-L-methionine biosynthesis; S-adenosyl-L-methionine from L-methionine: step 1/1. Catalyzes the formation of S-adenosylmethionine (AdoMet) from methionine and ATP. The overall synthetic reaction is composed of two sequential steps, AdoMet formation and the subsequent tripolyphosphate hydrolysis which occurs prior to release of AdoMet from the enzyme. The chain is S-adenosylmethionine synthase from Clostridium botulinum (strain Kyoto / Type A2).